Here is a 220-residue protein sequence, read N- to C-terminus: MAAAVSAKLVKELRDKTGAGMMDCKKALAATEGDANKAVEWLRQKGIASAEKKSGRTAAEGAIGSYIHTGARVGVLVEVNCETDFVARGDMFQSLLRDVSMQVAACPNVEYVTTDEIPNEIREREKAIEMGRDDLEGKPEQMKEKIVEGRIGKRLKELALMEQPFIKDSSITVADLVKQTAGKIGENVKVRRFTRYTLGEGIEVEENDFAAEVASMQNAG.

Residues 83–86 (TDFV) are involved in Mg(2+) ion dislocation from EF-Tu.

This sequence belongs to the EF-Ts family.

The protein localises to the cytoplasm. Its function is as follows. Associates with the EF-Tu.GDP complex and induces the exchange of GDP to GTP. It remains bound to the aminoacyl-tRNA.EF-Tu.GTP complex up to the GTP hydrolysis stage on the ribosome. The protein is Elongation factor Ts of Synechococcus sp. (strain CC9605).